The chain runs to 449 residues: MKKGLTLDLSKTQAFVKDYELDYMEGMVKDSHDRLHSKTGQGNDFLGWIDLPVDYDKEEFARIKKAAEKIQSDSDVLIVIGIGGSYLGARAAIEMLTSNFHNVLDDNKRKVPKIFYAGNNISSTYMAELLEAIDGKDVSVNVISKSGTTTEPAIAFRIFKSYLEKKYGVEEARKRIYATTDKAKGALKGLADVEGYETFVIPDDVGGRFTVLTPVGLLPIAVAGINIDEMMQGAADAREAYSNPSLKENDCYKYAVTRNALYNKGKEIEVLVNYEPCIHYFNEWWKQLYGESEGKDKKGLFPAAVDFSTDLHSMGQYIQDGRRNLFETVINVEKARKEITIEFSEGDLDGLNFLTGKTMDFVNNKAFQGTLLAHNDGEVPNMVLNVPELSPYYFGHMVYFFEKACGISGYLLGINPFDQPGVEAYKKNMFALLGKPGYEDMKDELEKRL.

Glutamate 291 serves as the catalytic Proton donor. Active-site residues include histidine 312 and lysine 426.

It belongs to the GPI family.

The protein localises to the cytoplasm. It catalyses the reaction alpha-D-glucose 6-phosphate = beta-D-fructose 6-phosphate. The protein operates within carbohydrate biosynthesis; gluconeogenesis. It participates in carbohydrate degradation; glycolysis; D-glyceraldehyde 3-phosphate and glycerone phosphate from D-glucose: step 2/4. Catalyzes the reversible isomerization of glucose-6-phosphate to fructose-6-phosphate. The protein is Glucose-6-phosphate isomerase of Clostridium botulinum (strain Eklund 17B / Type B).